A 1036-amino-acid chain; its full sequence is Protein smoothened (1036 aa).

Positions 1-31 are cleaved as a signal peptide; the sequence is MQYLNFPRMPNIMMFLEVAILCLWVVADASA. Residues 32-258 are Extracellular-facing; that stretch reads SSAKFGSTTP…DDEHRQIHKL (227 aa). N-linked (GlcNAc...) asparagine glycans are attached at residues asparagine 55 and asparagine 95. The FZ domain maps to 85 to 206; that stretch reads VRRARCYPTS…TLFPTKCTNG (122 aa). Cystine bridges form between cysteine 90/cysteine 155, cysteine 100/cysteine 148, cysteine 139/cysteine 179, and cysteine 172/cysteine 194. Residues asparagine 184, asparagine 195, and asparagine 213 are each glycosylated (N-linked (GlcNAc...) asparagine). Cystine bridges form between cysteine 218/cysteine 238 and cysteine 242/cysteine 320. Residues 259–279 traverse the membrane as a helical segment; the sequence is IGWAGSICLLSNLFVVSTFFI. The Cytoplasmic segment spans residues 280–287; that stretch reads DWKNANKY. The helical transmembrane segment at 288–308 threads the bilayer; it reads PAVIVFYINLCFLIACVGWLL. Residues 309–339 are Extracellular-facing; that stretch reads QFTSGSREDIVCRKDGTLRHSEPTAGENLSC. Residue asparagine 336 is glycosylated (N-linked (GlcNAc...) asparagine). Cysteine 339 and cysteine 413 are joined by a disulfide. A helical transmembrane segment spans residues 340–360; sequence IVIFVLVYYFLTAGMVWFVFL. Residues 361 to 381 lie on the Cytoplasmic side of the membrane; the sequence is TYAWHWRAMGHVQDRIDKKGS. The chain crosses the membrane as a helical span at residues 382–402; that stretch reads YFHLVAWSLPLVLTITTMAFS. Topologically, residues 403–421 are extracellular; it reads EVDGNSIVGICFVGYINHS. N-linked (GlcNAc...) asparagine glycosylation is present at asparagine 419. A helical membrane pass occupies residues 422–442; the sequence is MRAGLLLGPLCGVILIGGYFI. Over 443 to 469 the chain is Cytoplasmic; the sequence is TRGMVMLFGLKHFANDIKSTSASNKIH. A helical transmembrane segment spans residues 470-490; that stretch reads LIIMRMGVCALLTLVFILVAI. At 491–532 the chain is on the extracellular side; sequence ACHVTEFRHADEWAQSFRQFIICKISSVFEEKSSCRIENRPS. Cysteine 513 and cysteine 525 are joined by a disulfide. The helical transmembrane segment at 533-553 threads the bilayer; that stretch reads VGVLQLHLLCLFSSGIVMSTW. Topologically, residues 554–1036 are cytoplasmic; the sequence is CWTPSSIETW…KLKMLLLPSK (483 aa). A phosphoserine mark is found at serine 658, serine 659, serine 667, serine 670, serine 673, serine 687, serine 690, and serine 693. Disordered regions lie at residues 678–745 and 870–902; these read HVSV…TSVE and IKKS…KNPA. The span at 880–899 shows a compositional bias: basic residues; the sequence is RHSRNSARSQSKKSQKRHLK.

The protein belongs to the G-protein coupled receptor Fz/Smo family. Interacts with cos. Post-translationally, phosphorylation by CkIalpha and PKA regulates smo accumulation at the cell surface and its signaling activity in response to hh. As to expression, expressed in olfactory sensory neurons (at protein level).

Its subcellular location is the cell membrane. The protein localises to the cell projection. It localises to the cilium. Functionally, segment polarity protein required for correct patterning of every segment. G protein-coupled receptor which associates with the patched protein (ptc) to transduce the hedgehog (hh) signal through the activation of an inhibitory G-protein. In the absence of hh, ptc represses the constitutive signaling activity of smo through fused (fu). Essential component of a hh-signaling pathway which regulates the Duox-dependent gut immune response to bacterial uracil; required to activate Cad99C-dependent endosome formation, norpA-dependent Ca2+ mobilization and p38 MAPK, which are essential steps in the Duox-dependent production of reactive oxygen species (ROS) in response to intestinal bacterial infection. The protein is Protein smoothened (smo) of Drosophila melanogaster (Fruit fly).